A 335-amino-acid polypeptide reads, in one-letter code: Nucleoid-associated protein Ent638_2782 (335 aa).

The protein belongs to the YejK family.

It localises to the cytoplasm. The protein localises to the nucleoid. In Enterobacter sp. (strain 638), this protein is Nucleoid-associated protein Ent638_2782.